Here is a 156-residue protein sequence, read N- to C-terminus: ATP synthase subunit b (156 aa).

The helical transmembrane segment at 7–29 threads the bilayer; sequence LFGQTIAFAIFVWFCMKFVWPPL.

The protein belongs to the ATPase B chain family. In terms of assembly, F-type ATPases have 2 components, F(1) - the catalytic core - and F(0) - the membrane proton channel. F(1) has five subunits: alpha(3), beta(3), gamma(1), delta(1), epsilon(1). F(0) has three main subunits: a(1), b(2) and c(10-14). The alpha and beta chains form an alternating ring which encloses part of the gamma chain. F(1) is attached to F(0) by a central stalk formed by the gamma and epsilon chains, while a peripheral stalk is formed by the delta and b chains.

It is found in the cell inner membrane. Functionally, f(1)F(0) ATP synthase produces ATP from ADP in the presence of a proton or sodium gradient. F-type ATPases consist of two structural domains, F(1) containing the extramembraneous catalytic core and F(0) containing the membrane proton channel, linked together by a central stalk and a peripheral stalk. During catalysis, ATP synthesis in the catalytic domain of F(1) is coupled via a rotary mechanism of the central stalk subunits to proton translocation. Its function is as follows. Component of the F(0) channel, it forms part of the peripheral stalk, linking F(1) to F(0). The polypeptide is ATP synthase subunit b (Ectopseudomonas mendocina (strain ymp) (Pseudomonas mendocina)).